Reading from the N-terminus, the 1011-residue chain is Probable calcium-transporting ATPase (1011 aa).

Over 1-65 (MLPENLPTDP…WKLVLAQFED (65 aa)) the chain is Cytoplasmic. A helical transmembrane segment spans residues 66–84 (TLVRILLLAATVSFAMAVV). Residues 85–90 (ENNAAD) are Extracellular-facing. A helical transmembrane segment spans residues 91 to 110 (FVEPFIILLILILNATVGVW). Topologically, residues 111 to 258 (QENRAEGAIE…QVKLDEFGVL (148 aa)) are cytoplasmic. The chain crosses the membrane as a helical span at residues 259–278 (LSKVIGYICLVVFAVNLVRW). The Extracellular portion of the chain corresponds to 279–303 (YATHKPTKNETFFTRYIQPSVHCLK). A helical membrane pass occupies residues 304 to 321 (VAVALAVAAIPEGLPAVV). At 322-770 (TTCLALGTRR…RYLISSNIGE (449 aa)) the chain is on the cytoplasmic side. The active-site 4-aspartylphosphate intermediate is the aspartate 357. Lysine 514 contributes to the ATP binding site. The helical transmembrane segment at 771–794 (VVCILVTGLFGLPEALSPVQLLWV) threads the bilayer. Over 795–835 (NLVTDGLPATALGFNAPDRDIMEQRPRRMEEPIVNGWLFMR) the chain is Extracellular. The helical transmembrane segment at 836–856 (YMVIGVYVGLATVGGFLWWFL) threads the bilayer. Residues 857–885 (RHGFSWHDLTTYTACSDMTNGTCLLLANP) are Cytoplasmic-facing. A helical transmembrane segment spans residues 886–905 (QTARAIALSILVVVEMLNAL). The Extracellular segment spans residues 906–922 (NALSENASLIVSRPSSN). The chain crosses the membrane as a helical span at residues 923–942 (VWLLFAIFSSLSLHLIIMYV). At 943–1011 (PFFAKLFNIV…MEKAQEKKKD (69 aa)) the chain is on the cytoplasmic side.

The protein belongs to the cation transport ATPase (P-type) (TC 3.A.3) family.

It is found in the flagellar pocket. The protein resides in the cell membrane. The enzyme catalyses Ca(2+)(in) + ATP + H2O = Ca(2+)(out) + ADP + phosphate + H(+). Its function is as follows. This magnesium-dependent enzyme catalyzes the hydrolysis of ATP coupled with the transport of the calcium. This Trypanosoma brucei brucei protein is Probable calcium-transporting ATPase (TBA1).